We begin with the raw amino-acid sequence, 122 residues long: Protein TCL1B3 (122 aa).

The protein belongs to the TCL1 family.

The polypeptide is Protein TCL1B3 (Tcl1b3) (Mus musculus (Mouse)).